A 473-amino-acid polypeptide reads, in one-letter code: Ribonuclease Y (473 aa).

The helical transmembrane segment at 4 to 24 threads the bilayer; it reads LIAFIILLILFVLLITIVPVV. Positions 158-218 constitute a KH domain; sequence SLFNIDIIDE…IRREIARIVM (61 aa). One can recognise an HD domain in the interval 285-378; sequence ILSHSLEVAE…VKIVDTLSAA (94 aa).

Belongs to the RNase Y family.

It localises to the cell membrane. In terms of biological role, endoribonuclease that initiates mRNA decay. The sequence is that of Ribonuclease Y from Ureaplasma parvum serovar 3 (strain ATCC 27815 / 27 / NCTC 11736).